The chain runs to 200 residues: LHFPL tetraspan subfamily member 6 protein (200 aa).

The N-terminal stretch at 1–23 is a signal peptide; that stretch reads MASSLTCTGVIWALLSFLSAATS. A run of 3 helical transmembrane segments spans residues 84 to 104, 123 to 143, and 166 to 186; these read ICTI…LTAL, GIQF…PLGW, and IGWA…LCTW.

The protein belongs to the LHFP family.

Its subcellular location is the membrane. The sequence is that of LHFPL tetraspan subfamily member 6 protein from Rattus norvegicus (Rat).